Reading from the N-terminus, the 293-residue chain is Taste receptor type 2 member 143 (293 aa).

Over 1–6 the chain is Extracellular; the sequence is MPSTPT. Residues 7 to 27 form a helical membrane-spanning segment; it reads LIFIIIFYLVSLASMLQNGFM. The Cytoplasmic portion of the chain corresponds to 28 to 55; sequence MIVLGREWMRNRTLPAADMIVASLASSR. A helical transmembrane segment spans residues 56-76; it reads FCLHGIAILANLLASFDFCYQ. Topologically, residues 77 to 79 are extracellular; sequence ANL. The chain crosses the membrane as a helical span at residues 80 to 100; sequence IGILWDFTNTLIFWLTAWLAI. Residues 101–127 lie on the Cytoplasmic side of the membrane; sequence FYCVKISSFSHPVLFWLKWRISQLVPR. Residues 128–148 form a helical membrane-spanning segment; the sequence is LLVVSLIIGGLSAVISATGNF. Topologically, residues 149–181 are extracellular; sequence MANQMTISQGFHGNCTFGHMSLDFYRYYYLYHS. Asparagine 162 carries N-linked (GlcNAc...) asparagine glycosylation. The helical transmembrane segment at 182–202 threads the bilayer; the sequence is VLMWFTPFFLFLVSVIVLMFS. At 203-227 the chain is on the cytoplasmic side; it reads LYQHVEKMRGHRPGPWDLHTQAHTM. The chain crosses the membrane as a helical span at residues 228–248; that stretch reads ALKSLTFFFIFYIFFFLALVI. The Extracellular portion of the chain corresponds to 249–264; sequence SSTKRKSMQSYYWARE. Residues 265–285 form a helical membrane-spanning segment; it reads AIIYTGIFLNSIILLFSNPKL. Residues 286-293 are Cytoplasmic-facing; the sequence is RKALKMRF.

It belongs to the G-protein coupled receptor T2R family.

It localises to the membrane. Functionally, putative taste receptor which may play a role in the perception of bitterness. In Mus musculus (Mouse), this protein is Taste receptor type 2 member 143 (Tas2r143).